We begin with the raw amino-acid sequence, 178 residues long: CRISPR system ring nuclease SSO2081 (178 aa).

The transition state stabilizer stretch occupies residues 105 to 106 (RK).

This sequence belongs to the cOA ring nuclease family. As to quaternary structure, homodimer. Requires Does not require a metal cofactor. as cofactor.

Its subcellular location is the cytoplasm. The enzyme catalyses cyclic tetraadenylate = 2 5'-hydroxy-diadenylate 2',3'-cylic phosphate. Functionally, CRISPR (clustered regularly interspaced short palindromic repeat) is an adaptive immune system that provides protection against mobile genetic elements (viruses, transposable elements and conjugative plasmids). CRISPR clusters contain spacers, sequences complementary to antecedent mobile elements, and target invading nucleic acids. CRISPR clusters are transcribed and processed into CRISPR RNA (crRNA). A nuclease that degrades cyclic oligoadenylates (cOA), second messengers that induce an antiviral state important for defense against invading nucleic acids. Destruction of cOA deactivates the Csx1 ribonuclease, preventing uncontrolled degradation of cellular RNA. Degrades cA4 (a tetraadenylate ring) into a linear diadenylate product with 5'-OH and 2',3'-cyclic phosphate termini. Is 10-fold more active than SSO1393, suggesting this is the major cA4 degradation enzyme. Is highly specific for cA4; it has very poor activity on cA6 and no discernible activity against a number of cyclic dinucleotides. There may be 2 active sites per homodimer. In Saccharolobus solfataricus (strain ATCC 35092 / DSM 1617 / JCM 11322 / P2) (Sulfolobus solfataricus), this protein is CRISPR system ring nuclease SSO2081.